Reading from the N-terminus, the 225-residue chain is RNA-binding protein 24-A (225 aa).

Positions T11 to L88 constitute an RRM domain.

Its subcellular location is the nucleus. It localises to the cytoplasm. In terms of biological role, multifunctional RNA-binding protein involved in the regulation of pre-mRNA splicing, mRNA stability and mRNA translation important for cell fate decision and differentiation. Plays a major role in pre-mRNA alternative splicing regulation. Mediates preferentially muscle-specific exon inclusion in numerous mRNAs important for striated cardiac and skeletal muscle cell differentiation. Binds to intronic splicing enhancer (ISE) composed of stretches of GU-rich motifs localized in flanking intron of exon that will be included by alternative splicing. Involved in embryonic stem cell (ESC) transition to cardiac cell differentiation by promoting pre-mRNA alternative splicing events of several pluripotency and/or differentiation genes. Plays a role in the regulation of mRNA stability and mRNA translation to which it is bound. Involved in myogenic differentiation by regulating myog levels. Binds to a huge amount of mRNAs. Required for embryonic heart development, sarcomer and M-band formation in striated muscles. The chain is RNA-binding protein 24-A (rbm24-a) from Xenopus laevis (African clawed frog).